A 29-amino-acid chain; its full sequence is Cyclotide cter-L (29 aa).

Positions 1 to 29 (HEPCGESCVFIPCITTVVGCSCKNKVCYD) form a cross-link, cyclopeptide (His-Asp). Disulfide bonds link cysteine 4/cysteine 20, cysteine 8/cysteine 22, and cysteine 13/cysteine 27.

In terms of processing, contains 3 disulfide bonds. This is a cyclic peptide.

In terms of biological role, probably participates in a plant defense mechanism. In Clitoria ternatea (Butterfly pea), this protein is Cyclotide cter-L.